The following is a 626-amino-acid chain: (+)-3-carene synthase 2, chloroplastic (626 aa).

The transit peptide at 1–45 (MSLISAVPLASSCVSKSLISSVREHTALRRAIATLQMSRRGKSVA) directs the protein to the chloroplast. 3 residues coordinate Mg(2+): Asp377, Asp381, and Asp529. The DDXXD motif motif lies at 377-381 (DDMYD).

This sequence belongs to the terpene synthase family. Tpsd subfamily. Mg(2+) serves as cofactor. Mn(2+) is required as a cofactor.

The protein localises to the plastid. Its subcellular location is the chloroplast. It catalyses the reaction (2E)-geranyl diphosphate = (+)-car-3-ene + diphosphate. The protein operates within terpene metabolism; oleoresin biosynthesis. Its pathway is secondary metabolite biosynthesis; terpenoid biosynthesis. In terms of biological role, monoterpene synthase (TPS) involved in the biosynthesis of monoterpene natural products included in conifer oleoresin secretions and volatile emissions; these compounds contribute to biotic and abiotic stress defense against herbivores and pathogens. Catalyzes the conversion of (2E)-geranyl diphosphate (GPP) to (+)-3-carene. This chain is (+)-3-carene synthase 2, chloroplastic, found in Pinus banksiana (Jack pine).